The following is a 512-amino-acid chain: 2-isopropylmalate synthase (512 aa).

Residues 5 to 268 (LIIFDTTLRD…DVDIETQHIL (264 aa)) enclose the Pyruvate carboxyltransferase domain. Mn(2+) contacts are provided by D14, H202, H204, and N239. Positions 394-512 (SFVSLSQHSE…SKADRVAAQG (119 aa)) are regulatory domain.

This sequence belongs to the alpha-IPM synthase/homocitrate synthase family. LeuA type 1 subfamily. In terms of assembly, homodimer. It depends on Mn(2+) as a cofactor.

It is found in the cytoplasm. The catalysed reaction is 3-methyl-2-oxobutanoate + acetyl-CoA + H2O = (2S)-2-isopropylmalate + CoA + H(+). It functions in the pathway amino-acid biosynthesis; L-leucine biosynthesis; L-leucine from 3-methyl-2-oxobutanoate: step 1/4. Catalyzes the condensation of the acetyl group of acetyl-CoA with 3-methyl-2-oxobutanoate (2-ketoisovalerate) to form 3-carboxy-3-hydroxy-4-methylpentanoate (2-isopropylmalate). The protein is 2-isopropylmalate synthase of Albidiferax ferrireducens (strain ATCC BAA-621 / DSM 15236 / T118) (Rhodoferax ferrireducens).